The primary structure comprises 594 residues: Tripeptidyl-peptidase sed4 (594 aa).

A signal peptide spans 1–20 (MLSSTLYAGWLLSLAAPALC). A propeptide spans 21–187 (VVQEKLSAVP…AVKLPALPRR (167 aa)) (removed in mature form). N-linked (GlcNAc...) asparagine glycans are attached at residues N191, N229, and N250. One can recognise a Peptidase S53 domain in the interval 197-594 (LITPDCLVEM…MKLKELVLSL (398 aa)). Residues E272, D276, and S494 each act as charge relay system in the active site. Residues D536 and I537 each contribute to the Ca(2+) site. N-linked (GlcNAc...) asparagine glycosylation occurs at N568. Positions 572 and 574 each coordinate Ca(2+).

It depends on Ca(2+) as a cofactor. N-glycosylated.

The protein resides in the secreted. Its subcellular location is the extracellular space. It catalyses the reaction Release of an N-terminal tripeptide from a polypeptide.. Its function is as follows. Secreted tripeptidyl-peptidase which degrades proteins at acidic pHs and is involved in virulence. The protein is Tripeptidyl-peptidase sed4 (sed4) of Aspergillus fumigatus (strain ATCC MYA-4609 / CBS 101355 / FGSC A1100 / Af293) (Neosartorya fumigata).